We begin with the raw amino-acid sequence, 410 residues long: Replication factor C large subunit (410 aa).

46–53 (GDPGTGKT) lines the ATP pocket.

Belongs to the activator 1 small subunits family. RfcL subfamily. Heteromultimer composed of small subunits (RfcS) and large subunits (RfcL).

Functionally, part of the RFC clamp loader complex which loads the PCNA sliding clamp onto DNA. The protein is Replication factor C large subunit of Picrophilus torridus (strain ATCC 700027 / DSM 9790 / JCM 10055 / NBRC 100828 / KAW 2/3).